The chain runs to 508 residues: Photosystem II CP47 reaction center protein (508 aa).

The next 6 membrane-spanning stretches (helical) occupy residues 21-36 (SVHI…WAGS), 101-115 (IVFS…IWHW), 140-156 (GIHL…FGAF), 203-218 (IAAG…FHLS), 237-252 (VLSS…AFVV), and 457-472 (SFAL…HGAR).

This sequence belongs to the PsbB/PsbC family. PsbB subfamily. As to quaternary structure, PSII is composed of 1 copy each of membrane proteins PsbA, PsbB, PsbC, PsbD, PsbE, PsbF, PsbH, PsbI, PsbJ, PsbK, PsbL, PsbM, PsbT, PsbX, PsbY, PsbZ, Psb30/Ycf12, at least 3 peripheral proteins of the oxygen-evolving complex and a large number of cofactors. It forms dimeric complexes. It depends on Binds multiple chlorophylls. PSII binds additional chlorophylls, carotenoids and specific lipids. as a cofactor.

Its subcellular location is the plastid. It is found in the chloroplast thylakoid membrane. One of the components of the core complex of photosystem II (PSII). It binds chlorophyll and helps catalyze the primary light-induced photochemical processes of PSII. PSII is a light-driven water:plastoquinone oxidoreductase, using light energy to abstract electrons from H(2)O, generating O(2) and a proton gradient subsequently used for ATP formation. The protein is Photosystem II CP47 reaction center protein of Lemna minor (Common duckweed).